A 666-amino-acid polypeptide reads, in one-letter code: Probable potassium transport system protein Kup (666 aa).

12 consecutive transmembrane segments (helical) span residues 53–73 (FWALTLGSIGVVFGDIGTSPL), 89–109 (VTPVIVLGVLSLILWSLFIVV), 144–164 (LLLLALGVVGASMFIGDSMIT), 181–201 (PEFGNYVVPLTLLILVMLFAV), 212–232 (AFAPVMALWFVAIAVLGALHI), 247–267 (AIHFLLNHGLIGLVIMGLVFL), 291–311 (WFCLVLPALLLNYFGQGALIL), 324–344 (LAPAPMILPLVILATAATVIA), 381–401 (IYLPRVNILLLIGVLLLVLLF), 411–431 (YGIAVSTTMVADGIMGFVVVW), 441–461 (AAALVVPLVVVDIMFFSANLL), and 463–483 (LLDGAWVPLLFGLIMVVLIWT).

The protein belongs to the HAK/KUP transporter (TC 2.A.72) family.

The protein localises to the cell inner membrane. The enzyme catalyses K(+)(in) + H(+)(in) = K(+)(out) + H(+)(out). Its function is as follows. Transport of potassium into the cell. Likely operates as a K(+):H(+) symporter. In Nitrobacter hamburgensis (strain DSM 10229 / NCIMB 13809 / X14), this protein is Probable potassium transport system protein Kup.